The primary structure comprises 279 residues: 5'-nucleotidase SurE 1 (279 aa).

A divalent metal cation contacts are provided by aspartate 12, aspartate 13, serine 45, and asparagine 103.

Belongs to the SurE nucleotidase family. A divalent metal cation is required as a cofactor.

It is found in the cytoplasm. It carries out the reaction a ribonucleoside 5'-phosphate + H2O = a ribonucleoside + phosphate. Its function is as follows. Nucleotidase that shows phosphatase activity on nucleoside 5'-monophosphates. The sequence is that of 5'-nucleotidase SurE 1 from Chlamydia caviae (strain ATCC VR-813 / DSM 19441 / 03DC25 / GPIC) (Chlamydophila caviae).